The sequence spans 433 residues: Urokinase-type plasminogen activator (433 aa).

An N-terminal signal peptide occupies residues 1–20 (MKVWLASLFLCALVVKNSEG). The region spanning 28–64 (DESNCGCQNGGVCVSYKYFSRIRRCSCPRKFQGEHCE) is the EGF-like domain. 6 disulfide bridges follow: C32-C40, C34-C52, C54-C63, C71-C152, C92-C134, and C123-C147. Residues 35–58 (QNGGVCVSYKYFSRIRRCSCPRKF) are binds urokinase plasminogen activator surface receptor. In terms of domain architecture, Kringle spans 71-152 (CYHGNGDSYR…FVQECMVHDC (82 aa)). A connecting peptide region spans residues 153-179 (SLSKKPSSSVDQQGFQCGQKALRPRFK). At S159 the chain carries Phosphoserine. Disulfide bonds link C169-C301, C211-C227, C219-C290, C315-C384, C347-C363, and C374-C402. Positions 180 to 426 (IVGGEFTEVE…FLDWIQSHIG (247 aa)) constitute a Peptidase S1 domain. Active-site charge relay system residues include H226 and D277. S378 functions as the Charge relay system in the catalytic mechanism.

It belongs to the peptidase S1 family. In terms of assembly, found in high and low molecular mass forms. Each consists of two chains, A and B. The high molecular mass form contains a long chain A which is cleaved to yield a short chain A. Forms heterodimer with SERPINA5. Binds LRP1B; binding is followed by internalization and degradation. Interacts with MRC2. Interacts with PLAUR. In complex with SERPINE1, interacts with PLAUR/uPAR. Interacts with SORL1 and LRP1, either alone or in complex with SERPINE1; these interactions are abolished in the presence of LRPAP1/RAP. The ternary complex composed of PLAUR-PLAU-PAI1 also interacts with SORLA. In terms of processing, produced as an inactive single-chain protein (pro-uPA or sc-uPA), is processed into the active disulfide-linked two-chain form of PLAU/uPA by a proteolytic event mediated, at least, by TMPRSS4.

It is found in the secreted. It carries out the reaction Specific cleavage of Arg-|-Val bond in plasminogen to form plasmin.. With respect to regulation, inhibited by SERPINA5. Inhibited by SERPINE1. Specifically cleaves the zymogen plasminogen to form the active enzyme plasmin. The polypeptide is Urokinase-type plasminogen activator (Plau) (Mus musculus (Mouse)).